A 633-amino-acid chain; its full sequence is Basic helix-loop-helix ARNT-like protein 1 (633 aa).

The disordered stretch occupies residues 1-65 (MADQRMDISS…GMDTDKDDQH (65 aa)). Phosphoserine; by GSK3-beta is present on Ser17. Positions 24-33 (ISSSLSTSGM) are enriched in polar residues. The Nuclear localization signal signature appears at 36–41 (NRKRKG). In terms of domain architecture, bHLH spans 79-132 (NAREAHSQIEKRRRDKMNSFIDELASLVPTCNAMSRKLDKLTVLRMAVQHMKTL). Residue Ser85 is modified to Phosphoserine. Ser97 carries the post-translational modification Phosphoserine; by CK2. Positions 149 to 159 (LSDDELKHLIL) match the Nuclear export signal 1 motif. The PAS 1 domain maps to 150 to 222 (SDDELKHLIL…EQLSSSDTAP (73 aa)). Lys259 is covalently cross-linked (Glycyl lysine isopeptide (Lys-Gly) (interchain with G-Cter in SUMO2 and SUMO3)). A Glycyl lysine isopeptide (Lys-Gly) (interchain with G-Cter in SUMO) cross-link involves residue Lys266. Residues 333-403 (PQPVNGEIRV…ECHRQVLQTR (71 aa)) form the PAS 2 domain. The Nuclear export signal 2 signature appears at 368 to 376 (LAYLPQELL). One can recognise a PAC domain in the interval 408–451 (TNCYKFKIKDGSFITLRSRWFSFMNPWTKEVEYIVSTNTVVSTN). Disordered stretches follow at residues 472–499 (SVLQ…RAGA) and 518–555 (GSSP…TPDI). Residues 518-528 (GSSPSSCGSSP) are compositionally biased toward low complexity. N6-acetyllysine is present on Lys545.

Component of the circadian clock oscillator which includes the CRY1/2 proteins, CLOCK or NPAS2, BMAL1 or BMAL2, CSNK1D and/or CSNK1E, TIMELESS and the PER1/2/3 proteins. Forms a heterodimer with CLOCK. The CLOCK-BMAL1 heterodimer is required for E-box-dependent transactivation, for CLOCK nuclear translocation and degradation, and, for phosphorylation of both CLOCK and BMAL1. Interacts with PER1, PER2, CRY1 and CRY2 and this interaction requires a translocation to the nucleus. Interaction of the CLOCK-BMAL1 heterodimer with PER or CRY inhibits transcription activation. Post-translationally, ubiquitinated, leading to its proteasomal degradation. Deubiquitinated by USP9X. O-glycosylated; contains O-GlcNAc. O-glycosylation by OGT prevents protein degradation by inhibiting ubiquitination. It also stabilizes the CLOCK-BMAL1 heterodimer thereby increasing CLOCK-BMAL1-mediated transcription of genes in the negative loop of the circadian clock such as PER1/2/3 and CRY1/2. In terms of processing, acetylated on Lys-545 by CLOCK during the repression phase of the circadian cycle. Acetylation facilitates recruitment of CRY1 protein and initiates the repression phase of the circadian cycle. Acetylated at Lys-545 by KAT5 during the activation phase of the cycle, leading to recruitment of the positive transcription elongation factor b (P-TEFb) and BRD4, followed by productive elongation of circadian transcripts. Deacetylated by SIRT1, which may result in decreased protein stability. Post-translationally, phosphorylated upon dimerization with CLOCK. Phosphorylation enhances the transcriptional activity, alters the subcellular localization and decreases the stability of the CLOCK-BMAL1 heterodimer by promoting its degradation. Phosphorylation shows circadian variations in the liver with a peak between CT10 to CT14. Phosphorylation at Ser-97 by CK2 is essential for its nuclear localization, its interaction with CLOCK and controls CLOCK nuclear entry. Dephosphorylation at Ser-85 is important for dimerization with CLOCK and transcriptional activity. Sumoylated on Lys-266 upon dimerization with CLOCK. Predominantly conjugated to poly-SUMO2/3 rather than SUMO1 and the level of these conjugates undergo rhythmic variation, peaking at CT9-CT12. Sumoylation localizes it exclusively to the PML body and promotes its ubiquitination in the PML body, ubiquitin-dependent proteasomal degradation and the transcriptional activity of the CLOCK-BMAL1 heterodimer. In terms of processing, undergoes lysosome-mediated degradation in a time-dependent manner in the liver.

Its subcellular location is the nucleus. It localises to the cytoplasm. The protein localises to the PML body. Functionally, transcriptional activator which forms a core component of the circadian clock. The circadian clock, an internal time-keeping system, regulates various physiological processes through the generation of approximately 24 hour circadian rhythms in gene expression, which are translated into rhythms in metabolism and behavior. It is derived from the Latin roots 'circa' (about) and 'diem' (day) and acts as an important regulator of a wide array of physiological functions including metabolism, sleep, body temperature, blood pressure, endocrine, immune, cardiovascular, and renal function. Consists of two major components: the central clock, residing in the suprachiasmatic nucleus (SCN) of the brain, and the peripheral clocks that are present in nearly every tissue and organ system. Both the central and peripheral clocks can be reset by environmental cues, also known as Zeitgebers (German for 'timegivers'). The predominant Zeitgeber for the central clock is light, which is sensed by retina and signals directly to the SCN. The central clock entrains the peripheral clocks through neuronal and hormonal signals, body temperature and feeding-related cues, aligning all clocks with the external light/dark cycle. Circadian rhythms allow an organism to achieve temporal homeostasis with its environment at the molecular level by regulating gene expression to create a peak of protein expression once every 24 hours to control when a particular physiological process is most active with respect to the solar day. Transcription and translation of core clock components (CLOCK, NPAS2, BMAL1, BMAL2, PER1, PER2, PER3, CRY1 and CRY2) plays a critical role in rhythm generation, whereas delays imposed by post-translational modifications (PTMs) are important for determining the period (tau) of the rhythms (tau refers to the period of a rhythm and is the length, in time, of one complete cycle). A diurnal rhythm is synchronized with the day/night cycle, while the ultradian and infradian rhythms have a period shorter and longer than 24 hours, respectively. Disruptions in the circadian rhythms contribute to the pathology of cardiovascular diseases, cancer, metabolic syndromes and aging. A transcription/translation feedback loop (TTFL) forms the core of the molecular circadian clock mechanism. Transcription factors, CLOCK or NPAS2 and BMAL1 or BMAL2, form the positive limb of the feedback loop, act in the form of a heterodimer and activate the transcription of core clock genes and clock-controlled genes (involved in key metabolic processes), harboring E-box elements (5'-CACGTG-3') within their promoters. The core clock genes: PER1/2/3 and CRY1/2 which are transcriptional repressors form the negative limb of the feedback loop and interact with the CLOCK|NPAS2-BMAL1|BMAL2 heterodimer inhibiting its activity and thereby negatively regulating their own expression. This heterodimer also activates nuclear receptors NR1D1/2 and RORA/B/G, which form a second feedback loop and which activate and repress BMAL1 transcription, respectively. The preferred binding motif for the CLOCK-BMAL1 heterodimer is 5'-CACGTGA-3', which contains a flanking adenine nucleotide at the 3-prime end of the canonical 6-nucleotide E-box sequence. CLOCK specifically binds to the half-site 5'-CAC-3', while BMAL1 binds to the half-site 5'-GTGA-3'. Essential for the rhythmic interaction of CLOCK with ASS1 and plays a critical role in positively regulating CLOCK-mediated acetylation of ASS1. Plays a role in protecting against lethal sepsis by limiting the expression of immune checkpoint protein CD274 in macrophages in a PKM2-dependent manner. The polypeptide is Basic helix-loop-helix ARNT-like protein 1 (BMAL1) (Tyto alba (Barn owl)).